The following is a 302-amino-acid chain: ICOS ligand (302 aa).

An N-terminal signal peptide occupies residues M1 to A18. An Ig-like V-type domain is found at D19 to E129. The Extracellular segment spans residues D19 to T256. Residues C37 and C113 are joined by a disulfide bond. N-linked (GlcNAc...) asparagine glycosylation is found at N70, N137, N173, N186, and N225. The 87-residue stretch at P141–T227 folds into the Ig-like C2-type domain. A disulfide bridge links C158 with C216. The helical transmembrane segment at W257 to C277 threads the bilayer. Over R278–V302 the chain is Cytoplasmic.

The protein belongs to the immunoglobulin superfamily. BTN/MOG family. Interacts with CTLA4 (in vitro). Expressed on peripheral blood B-cells and monocytes, as well as on monocyte-derived dendritic cells (at protein level). As to expression, widely expressed (brain, heart, kidney, liver, lung, pancreas, placenta, skeletal muscle, bone marrow, colon, ovary, prostate, testis, lymph nodes, leukocytes, spleen, thymus and tonsil). In terms of tissue distribution, detected only in lymph nodes, leukocytes and spleen. Expressed on activated monocytes and dendritic cells.

The protein localises to the cell membrane. In terms of biological role, ligand for the T-cell-specific cell surface receptor ICOS. Acts as a costimulatory signal for T-cell proliferation and cytokine secretion. Also induces B-cell proliferation and differentiation into plasma cells. Could play an important role in mediating local tissue responses to inflammatory conditions, as well as in modulating the secondary immune response by co-stimulating memory T-cell function. In endothelial cells, required for proper neutrophil transmigration in response to chemoattractants, such as CXCL8/IL8 or N-formyl-methionyl peptides (fMLP). This chain is ICOS ligand (ICOSLG), found in Homo sapiens (Human).